Reading from the N-terminus, the 406-residue chain is Peptide transporter imqD (406 aa).

The interval 1-25 is disordered; it reads MTAPADSTEKSETSETTTLQTTEVS. The span at 14–25 shows a compositional bias: low complexity; it reads SETTTLQTTEVS. Transmembrane regions (helical) follow at residues 184–204, 220–240, 262–282, 309–329, 344–364, and 373–393; these read GLVACRVILGFILFFTCLSQA, IPNDTITAMNPIFCVIMGPVI, ATGFIMMSASMAFAAGVQKII, VFLQTPTYIILAVAEIFSFVT, AVVQALGQLGAAAGSAIGIAI, and LIWMYTGLAVAMFLVAVVFWI.

This sequence belongs to the major facilitator superfamily. Proton-dependent oligopeptide transporter (POT/PTR) (TC 2.A.17) family.

It is found in the membrane. Its function is as follows. Peptide transporter; part of the gene cluster that mediates the biosynthesis of imizoquins A to D, tripeptide-derived alkaloids that serve a protective role against oxidative stress that are essential for normal germination. In Aspergillus flavus (strain ATCC 200026 / FGSC A1120 / IAM 13836 / NRRL 3357 / JCM 12722 / SRRC 167), this protein is Peptide transporter imqD.